A 159-amino-acid polypeptide reads, in one-letter code: Transcriptional repressor NrdR (159 aa).

Residues 3 to 34 fold into a zinc finger; sequence CPYCQSEDTQVKDSRPAEDGAAIRRRRVCPDC. The region spanning 49–139 is the ATP-cone domain; it reads LVVVKKSGRK…VYRNFREAKD (91 aa).

This sequence belongs to the NrdR family. The cofactor is Zn(2+).

In terms of biological role, negatively regulates transcription of bacterial ribonucleotide reductase nrd genes and operons by binding to NrdR-boxes. This chain is Transcriptional repressor NrdR, found in Mesorhizobium japonicum (strain LMG 29417 / CECT 9101 / MAFF 303099) (Mesorhizobium loti (strain MAFF 303099)).